A 383-amino-acid chain; its full sequence is Succinyl-diaminopimelate desuccinylase (383 aa).

Position 73 (His73) interacts with Zn(2+). Asp75 is an active-site residue. Position 107 (Asp107) interacts with Zn(2+). Glu141 serves as the catalytic Proton acceptor. Glu142, Glu170, and His356 together coordinate Zn(2+).

Belongs to the peptidase M20A family. DapE subfamily. As to quaternary structure, homodimer. Zn(2+) serves as cofactor. The cofactor is Co(2+).

The catalysed reaction is N-succinyl-(2S,6S)-2,6-diaminopimelate + H2O = (2S,6S)-2,6-diaminopimelate + succinate. It functions in the pathway amino-acid biosynthesis; L-lysine biosynthesis via DAP pathway; LL-2,6-diaminopimelate from (S)-tetrahydrodipicolinate (succinylase route): step 3/3. Catalyzes the hydrolysis of N-succinyl-L,L-diaminopimelic acid (SDAP), forming succinate and LL-2,6-diaminopimelate (DAP), an intermediate involved in the bacterial biosynthesis of lysine and meso-diaminopimelic acid, an essential component of bacterial cell walls. The sequence is that of Succinyl-diaminopimelate desuccinylase from Pseudomonas aeruginosa (strain UCBPP-PA14).